Here is a 260-residue protein sequence, read N- to C-terminus: Cytochrome c oxidase subunit 3 (260 aa).

At Met-1 to Pro-15 the chain is on the mitochondrial matrix side. The chain crosses the membrane as a helical span at residues Trp-16–Trp-34. The Mitochondrial intermembrane segment spans residues Phe-35–Met-40. A helical membrane pass occupies residues Ile-41–Thr-66. Over Phe-67–Thr-72 the chain is Mitochondrial matrix. Residues Pro-73–Ser-105 traverse the membrane as a helical segment. Residues Leu-106–Glu-128 are Mitochondrial intermembrane-facing. A helical membrane pass occupies residues Val-129–Met-152. Residues His-153–Asp-155 lie on the Mitochondrial matrix side of the membrane. The helical transmembrane segment at Arg-156–Glu-183 threads the bilayer. The Mitochondrial intermembrane segment spans residues Ala-184–Asp-190. The helical transmembrane segment at Gly-191–Ile-223 threads the bilayer. The Mitochondrial matrix portion of the chain corresponds to Gln-224 to His-232. The chain crosses the membrane as a helical span at residues Phe-233–Ile-255. The Mitochondrial intermembrane segment spans residues Tyr-256–Ser-260.

This sequence belongs to the cytochrome c oxidase subunit 3 family. In terms of assembly, component of the cytochrome c oxidase (complex IV, CIV), a multisubunit enzyme composed of 14 subunits. The complex is composed of a catalytic core of 3 subunits MT-CO1, MT-CO2 and MT-CO3, encoded in the mitochondrial DNA, and 11 supernumerary subunits COX4I, COX5A, COX5B, COX6A, COX6B, COX6C, COX7A, COX7B, COX7C, COX8 and NDUFA4, which are encoded in the nuclear genome. The complex exists as a monomer or a dimer and forms supercomplexes (SCs) in the inner mitochondrial membrane with NADH-ubiquinone oxidoreductase (complex I, CI) and ubiquinol-cytochrome c oxidoreductase (cytochrome b-c1 complex, complex III, CIII), resulting in different assemblies (supercomplex SCI(1)III(2)IV(1) and megacomplex MCI(2)III(2)IV(2)).

The protein resides in the mitochondrion inner membrane. It catalyses the reaction 4 Fe(II)-[cytochrome c] + O2 + 8 H(+)(in) = 4 Fe(III)-[cytochrome c] + 2 H2O + 4 H(+)(out). Component of the cytochrome c oxidase, the last enzyme in the mitochondrial electron transport chain which drives oxidative phosphorylation. The respiratory chain contains 3 multisubunit complexes succinate dehydrogenase (complex II, CII), ubiquinol-cytochrome c oxidoreductase (cytochrome b-c1 complex, complex III, CIII) and cytochrome c oxidase (complex IV, CIV), that cooperate to transfer electrons derived from NADH and succinate to molecular oxygen, creating an electrochemical gradient over the inner membrane that drives transmembrane transport and the ATP synthase. Cytochrome c oxidase is the component of the respiratory chain that catalyzes the reduction of oxygen to water. Electrons originating from reduced cytochrome c in the intermembrane space (IMS) are transferred via the dinuclear copper A center (CU(A)) of subunit 2 and heme A of subunit 1 to the active site in subunit 1, a binuclear center (BNC) formed by heme A3 and copper B (CU(B)). The BNC reduces molecular oxygen to 2 water molecules using 4 electrons from cytochrome c in the IMS and 4 protons from the mitochondrial matrix. The chain is Cytochrome c oxidase subunit 3 (mt-co3) from Xenopus laevis (African clawed frog).